The following is a 427-amino-acid chain: Trigger factor (427 aa).

The PPIase FKBP-type domain occupies 165–250 (GDTVVIDFEG…LHEIQEQVPA (86 aa)).

This sequence belongs to the FKBP-type PPIase family. Tig subfamily.

Its subcellular location is the cytoplasm. The catalysed reaction is [protein]-peptidylproline (omega=180) = [protein]-peptidylproline (omega=0). Its function is as follows. Involved in protein export. Acts as a chaperone by maintaining the newly synthesized protein in an open conformation. Functions as a peptidyl-prolyl cis-trans isomerase. The chain is Trigger factor from Sulfurovum sp. (strain NBC37-1).